The following is a 145-amino-acid chain: MIALIQRVSEASVTVEGEMTGAIGQGLLVLLGVEQGDDEAKADKLLHKVSGYRIFSDENGKMNLNVSQAGGGLLVVSQFTLAADTNKGMRPSFSGGAHPVEAERLYDYFVAQAAASGIPTATGRFAADMKVALVNDGPVTFWLQV.

A Gly-cisPro motif, important for rejection of L-amino acids motif is present at residues glycine 137–proline 138.

This sequence belongs to the DTD family. Homodimer.

It is found in the cytoplasm. It carries out the reaction glycyl-tRNA(Ala) + H2O = tRNA(Ala) + glycine + H(+). The catalysed reaction is a D-aminoacyl-tRNA + H2O = a tRNA + a D-alpha-amino acid + H(+). In terms of biological role, an aminoacyl-tRNA editing enzyme that deacylates mischarged D-aminoacyl-tRNAs. Also deacylates mischarged glycyl-tRNA(Ala), protecting cells against glycine mischarging by AlaRS. Acts via tRNA-based rather than protein-based catalysis; rejects L-amino acids rather than detecting D-amino acids in the active site. By recycling D-aminoacyl-tRNA to D-amino acids and free tRNA molecules, this enzyme counteracts the toxicity associated with the formation of D-aminoacyl-tRNA entities in vivo and helps enforce protein L-homochirality. The polypeptide is D-aminoacyl-tRNA deacylase (Aeromonas hydrophila subsp. hydrophila (strain ATCC 7966 / DSM 30187 / BCRC 13018 / CCUG 14551 / JCM 1027 / KCTC 2358 / NCIMB 9240 / NCTC 8049)).